The primary structure comprises 549 residues: Sphingosine-1-phosphate transporter SPNS2 (549 aa).

Disordered regions lie at residues 14 to 36 and 78 to 97; these read AEEE…GAGG and PGCA…PASL. A run of 11 helical transmembrane segments spans residues 141–161, 169–189, 202–222, 229–249, 261–281, 320–340, 364–384, 398–418, 422–442, 466–486, and 507–527; these read GLLQ…FGYL, VILS…SFIP, LVGI…GDLF, LMLS…YITG, WALR…LILV, LATS…PLYL, LIFG…GAGA, LVCA…FVAA, IVGA…NWAI, TSHL…SDLI, and LCPF…LFFL.

The protein belongs to the major facilitator superfamily. Spinster (TC 2.A.1.49) family. Expression is high in the lungs and liver, low in the lymph nodes, spleen and bone marrow, and very low but detectable in the thymus. Not expressed in red blood cells. Also expressed in the inner ear: expressed in the cochlea, both in the lateral wall and organ of Corti.

It localises to the cell membrane. The protein resides in the endosome membrane. The catalysed reaction is sphing-4-enine 1-phosphate(in) = sphing-4-enine 1-phosphate(out). The enzyme catalyses sphinganine 1-phosphate(in) = sphinganine 1-phosphate(out). Functionally, lipid transporter that specifically mediates export of sphingosine-1-phosphate (sphing-4-enine 1-phosphate, S1P) and sphinganine-1-phosphate in the lymph, thereby playing a role in lymphocyte trafficking. S1P is a bioactive signaling molecule that regulates many physiological processes important for the development and for the immune system. Regulates levels of S1P and the S1P gradient that exists between the high circulating concentrations of S1P and low tissue levels that control lymphocyte trafficking. Required for the egress of T-cells from lymph nodes during an immune response by mediating S1P secretion, which generates a gradient that enables activated T-cells to access lymph. Also required for the egress of immature B-cells from the bone marrow. In contrast, it does not mediate S1P release from red blood cells. Involved in auditory function: S1P release in the inner ear is required for maintenance of the endocochlear potential in the cochlea. In addition to export, also able to mediate S1P import. This chain is Sphingosine-1-phosphate transporter SPNS2, found in Mus musculus (Mouse).